Reading from the N-terminus, the 61-residue chain is Small ribosomal subunit protein uS14 (61 aa).

The Zn(2+) site is built by cysteine 24, cysteine 27, cysteine 40, and cysteine 43.

The protein belongs to the universal ribosomal protein uS14 family. Zinc-binding uS14 subfamily. In terms of assembly, part of the 30S ribosomal subunit. Contacts proteins S3 and S10. Zn(2+) serves as cofactor.

In terms of biological role, binds 16S rRNA, required for the assembly of 30S particles and may also be responsible for determining the conformation of the 16S rRNA at the A site. The polypeptide is Small ribosomal subunit protein uS14 (Ruminiclostridium cellulolyticum (strain ATCC 35319 / DSM 5812 / JCM 6584 / H10) (Clostridium cellulolyticum)).